Reading from the N-terminus, the 185-residue chain is Dual specificity protein phosphatase 3 (185 aa).

Residues 28–179 (QPCNEVVPRV…LCQLNDRLAK (152 aa)) enclose the Tyrosine-protein phosphatase domain. Cysteine 124 functions as the Phosphocysteine intermediate in the catalytic mechanism.

This sequence belongs to the protein-tyrosine phosphatase family. Non-receptor class dual specificity subfamily. As to quaternary structure, microtubule inner protein component of sperm flagellar doublet microtubules. Interacts with VRK3; this interaction activates DUSP3 phosphatase activity.

It localises to the nucleus. It is found in the cytoplasm. The protein resides in the cytoskeleton. The protein localises to the flagellum axoneme. It catalyses the reaction O-phospho-L-tyrosyl-[protein] + H2O = L-tyrosyl-[protein] + phosphate. It carries out the reaction O-phospho-L-seryl-[protein] + H2O = L-seryl-[protein] + phosphate. The catalysed reaction is O-phospho-L-threonyl-[protein] + H2O = L-threonyl-[protein] + phosphate. Its function is as follows. Shows activity both for tyrosine-protein phosphate and serine-protein phosphate, but displays a strong preference toward phosphotyrosines. Specifically dephosphorylates and inactivates ERK1 and ERK2. The chain is Dual specificity protein phosphatase 3 (Dusp3) from Mus musculus (Mouse).